The following is a 180-amino-acid chain: Crossover junction endodeoxyribonuclease RuvC (180 aa).

Catalysis depends on residues D7, E66, and D138. The Mg(2+) site is built by D7, E66, and D138.

The protein belongs to the RuvC family. In terms of assembly, homodimer which binds Holliday junction (HJ) DNA. The HJ becomes 2-fold symmetrical on binding to RuvC with unstacked arms; it has a different conformation from HJ DNA in complex with RuvA. In the full resolvosome a probable DNA-RuvA(4)-RuvB(12)-RuvC(2) complex forms which resolves the HJ. It depends on Mg(2+) as a cofactor.

It localises to the cytoplasm. It carries out the reaction Endonucleolytic cleavage at a junction such as a reciprocal single-stranded crossover between two homologous DNA duplexes (Holliday junction).. Its function is as follows. The RuvA-RuvB-RuvC complex processes Holliday junction (HJ) DNA during genetic recombination and DNA repair. Endonuclease that resolves HJ intermediates. Cleaves cruciform DNA by making single-stranded nicks across the HJ at symmetrical positions within the homologous arms, yielding a 5'-phosphate and a 3'-hydroxyl group; requires a central core of homology in the junction. The consensus cleavage sequence is 5'-(A/T)TT(C/G)-3'. Cleavage occurs on the 3'-side of the TT dinucleotide at the point of strand exchange. HJ branch migration catalyzed by RuvA-RuvB allows RuvC to scan DNA until it finds its consensus sequence, where it cleaves and resolves the cruciform DNA. The chain is Crossover junction endodeoxyribonuclease RuvC from Burkholderia pseudomallei (strain 1710b).